Here is a 485-residue protein sequence, read N- to C-terminus: Glutamyl-tRNA(Gln) amidotransferase subunit A (485 aa).

Residues K79 and S154 each act as charge relay system in the active site. The active-site Acyl-ester intermediate is the S178.

Belongs to the amidase family. GatA subfamily. As to quaternary structure, heterotrimer of A, B and C subunits.

The catalysed reaction is L-glutamyl-tRNA(Gln) + L-glutamine + ATP + H2O = L-glutaminyl-tRNA(Gln) + L-glutamate + ADP + phosphate + H(+). Allows the formation of correctly charged Gln-tRNA(Gln) through the transamidation of misacylated Glu-tRNA(Gln) in organisms which lack glutaminyl-tRNA synthetase. The reaction takes place in the presence of glutamine and ATP through an activated gamma-phospho-Glu-tRNA(Gln). The sequence is that of Glutamyl-tRNA(Gln) amidotransferase subunit A from Staphylococcus aureus (strain Mu3 / ATCC 700698).